Reading from the N-terminus, the 335-residue chain is Adenine deaminase (335 aa).

3 residues coordinate Zn(2+): His-17, His-19, and His-197. The Proton donor role is filled by Glu-200. Asp-278 provides a ligand contact to Zn(2+). Substrate is bound at residue Asp-279.

It belongs to the metallo-dependent hydrolases superfamily. Adenosine and AMP deaminases family. Adenine deaminase type 2 subfamily. Requires Zn(2+) as cofactor.

The catalysed reaction is adenine + H2O + H(+) = hypoxanthine + NH4(+). In terms of biological role, catalyzes the hydrolytic deamination of adenine to hypoxanthine. Plays an important role in the purine salvage pathway and in nitrogen catabolism. In Marinomonas sp. (strain MWYL1), this protein is Adenine deaminase.